The following is a 2359-amino-acid chain: Nonribosomal peptide synthetase anaPS (2359 aa).

The tract at residues 239-633 (RNATVHGDTL…VRRKDNQVKI (395 aa)) is adenylation 1. Positions 770 to 846 (AAQGKGEEAI…ELASAANLSN (77 aa)) constitute a Carrier 1 domain. S807 bears the O-(pantetheine 4'-phosphoryl)serine mark. The segment at 883–1292 (EDIYPSTALQ…VGDLPRMSRQ (410 aa)) is condensation 1. The tract at residues 1321–1709 (LEYPNACAVS…GRKDSQIKIR (389 aa)) is adenylation 2. A Carrier 2 domain is found at 1842 to 1918 (APSNSVEQDL…AIANKIGVVS (77 aa)). Position 1879 is an O-(pantetheine 4'-phosphoryl)serine (S1879). The interval 1936–2356 (LTPIQEFFFE…LVKCLEDLAS (421 aa)) is condensation 2.

The protein belongs to the NRP synthetase family.

It catalyses the reaction anthranilate + L-tryptophan + 2 ATP = (R)-benzodiazepinedione + 2 AMP + 2 diphosphate + H(+). The protein operates within alkaloid biosynthesis. Its function is as follows. Nonribosomal peptide synthetase; part of the gene cluster that mediates the biosynthesis of the prenylated pyrroloindoline diketopiperazine acetylaszonalenin. The first step in the pathway is the formation of (R)-benzodiazepinedione by condensation of tryptophan and anthranilic acid catalyzed by the non-ribosomal peptide synthetase anaPS. The prenyltransferase anaPT then converts (R)-benzodiazepinedione to aszonalenin in the presence of dimethylallyl diphosphate (DMAPP) via C3-prenylation. The last step in the biosynthesis of acetylaszonalenin via acetylation of aszonalenin at position N1 catalyzed by anaAT. This chain is Nonribosomal peptide synthetase anaPS, found in Neosartorya fischeri (strain ATCC 1020 / DSM 3700 / CBS 544.65 / FGSC A1164 / JCM 1740 / NRRL 181 / WB 181) (Aspergillus fischerianus).